We begin with the raw amino-acid sequence, 440 residues long: D-serine dehydratase (440 aa).

Lys-116 is modified (N6-(pyridoxal phosphate)lysine).

It belongs to the serine/threonine dehydratase family. DsdA subfamily. Monomer. Pyridoxal 5'-phosphate serves as cofactor.

The catalysed reaction is D-serine = pyruvate + NH4(+). This chain is D-serine dehydratase, found in Salmonella dublin (strain CT_02021853).